The primary structure comprises 627 residues: DEAD-box ATP-dependent RNA helicase 35A (627 aa).

Composition is skewed to low complexity over residues 1-15 and 52-61; these read MAAATASSPATAAAA and SSSAAEAASD. Disordered regions lie at residues 1–23 and 40–85; these read MAAATASSPATAAAANSDDEDNY and LRRL…LEAS. Residues 62-72 are compositionally biased toward pro residues; it reads LPPPPPPPPNQ. The Q motif motif lies at 182–210; it reads RDFRDLRLPEPMLRKLREKGIVQPTPIQV. Positions 213–397 constitute a Helicase ATP-binding domain; it reads LPVVLSGRDM…KSALVKPVIV (185 aa). Position 226-233 (226-233) interacts with ATP; sequence AFTGSGKT. A DEAD box motif is present at residues 345–348; the sequence is DEAD. The Helicase C-terminal domain occupies 408–568; sequence DVIQEVEYVK…RIPPVLAELN (161 aa). The segment at 584–601 adopts a CCHC-type zinc-finger fold; the sequence is KGCAYCGGLGHRVTDCPK.

Belongs to the DEAD box helicase family. DDX41 subfamily.

The enzyme catalyses ATP + H2O = ADP + phosphate + H(+). The protein is DEAD-box ATP-dependent RNA helicase 35A of Oryza sativa subsp. japonica (Rice).